The chain runs to 122 residues: Small ribosomal subunit protein uS12c (122 aa).

The protein belongs to the universal ribosomal protein uS12 family. In terms of assembly, part of the 30S ribosomal subunit.

It is found in the plastid. The protein resides in the chloroplast. With S4 and S5 plays an important role in translational accuracy. Located at the interface of the 30S and 50S subunits. The sequence is that of Small ribosomal subunit protein uS12c (rps12) from Cyanidioschyzon merolae (strain NIES-3377 / 10D) (Unicellular red alga).